A 293-amino-acid polypeptide reads, in one-letter code: Phosphoribosylaminoimidazole-succinocarboxamide synthase (293 aa).

The protein belongs to the SAICAR synthetase family.

It catalyses the reaction 5-amino-1-(5-phospho-D-ribosyl)imidazole-4-carboxylate + L-aspartate + ATP = (2S)-2-[5-amino-1-(5-phospho-beta-D-ribosyl)imidazole-4-carboxamido]succinate + ADP + phosphate + 2 H(+). It functions in the pathway purine metabolism; IMP biosynthesis via de novo pathway; 5-amino-1-(5-phospho-D-ribosyl)imidazole-4-carboxamide from 5-amino-1-(5-phospho-D-ribosyl)imidazole-4-carboxylate: step 1/2. This chain is Phosphoribosylaminoimidazole-succinocarboxamide synthase, found in Bordetella parapertussis (strain 12822 / ATCC BAA-587 / NCTC 13253).